Consider the following 548-residue polypeptide: Chaperonin GroEL (548 aa).

Residues 30–33 (TLGP), Lys51, 87–91 (DGTTT), Gly415, 479–481 (NAA), and Asp495 each bind ATP.

This sequence belongs to the chaperonin (HSP60) family. As to quaternary structure, forms a cylinder of 14 subunits composed of two heptameric rings stacked back-to-back. Interacts with the co-chaperonin GroES.

It localises to the cytoplasm. The catalysed reaction is ATP + H2O + a folded polypeptide = ADP + phosphate + an unfolded polypeptide.. In terms of biological role, together with its co-chaperonin GroES, plays an essential role in assisting protein folding. The GroEL-GroES system forms a nano-cage that allows encapsulation of the non-native substrate proteins and provides a physical environment optimized to promote and accelerate protein folding. The protein is Chaperonin GroEL of Pseudomonas fluorescens (strain SBW25).